Here is a 948-residue protein sequence, read N- to C-terminus: MLGRLAVRQAVRCSKASIKPVNTHQLCLRNFSAIRRLSFVAGAQCRPYHTTANMLHRTARGEHGMAACGNPSAAVKFERLPTFAEPTHYNVRLSPCLNQFSFDGHATIDVTIKEATDVLKVHAQSLLIQSVSLITQPGDASKSLETSYDDKLNILTIKLPTTMQPQKVQLDFKFVGELNDKMRGFYRSQYKDKNGTEKFLASTQFESTYARYAFPCFDEPIYKATFDVTLEVENHLTALSNMNVISETPTADGKRKAVTFATSPKMSSYLVAFAVGELEYISAQTKSGVEMRVYTVPGKKEQGQYSLDLSVKCIDWYNEWFDIKYPLPKCDLIAIPDFSMGAMENWGLVTYREIALLVDPGVTSTRQKSRVALVVAHELAHLWFGNLVTMKWWTDLWLKEGFASFMEYMFVGANCPEFKIWLHFLNDELASGMGLDALRNSHPIEVEIDNPNELDEIYDSITYAKSNSVNRMLCYYLSEPVFQKGLRLYLKRFQYSNAVTQDLWTALSEASGQNVNELMSGWTQQMGFPVLKVSQRQDGNNRILTVEQRRFISDGGEDPKNSQWQVPITVAVGSSPSDVKARFLLKEKQQEFTIEGVAPGEWVKLNSGTTGFYRVEYSDEMLTAMLPDIASRRMPVLDRFGLINDLSALLNTGRVSIAQFVQVAASSAKEDEYVVWGAIDEGMSKLLACAREMSEDTLKSAKQLVVKMFEQTGAELGFAEQAGEDSQKMMLRSLVQARLARAGHQPTIDKFTQMFNDFLEKGTPIHPDIRLATFGVVARYGGKEGFDKLMNLRETTTFQEIERQTMVAMSQTPEESLLAQLFEYGFEKNKVRPQDQLYLFLGTGATHMGQQYAWKYFCEHIKEFLDKYGGANSSLFQRCLKFAGESFGNEKRAVEFQDFFCNCNVLSDTDRQTLARPIGQTVEAIRLNARLLESNRQIIENLLKQSNV.

Substrate-binding positions include Glu-206 and 341–345 (GAMEN). His-377 lines the Zn(2+) pocket. The active-site Proton acceptor is Glu-378. Residues His-381 and Glu-400 each contribute to the Zn(2+) site.

This sequence belongs to the peptidase M1 family. The cofactor is Zn(2+). As to expression, expressed mainly in intestinal cells in the posterior part of the intestine and in amphid sensory neurons and nerve ring neurons. Expressed in neurons in the male tail. Expressed in mature spermatids (at protein level).

The protein resides in the cytoplasm. The protein localises to the cell cortex. It localises to the chromosome. Its subcellular location is the cytoskeleton. It is found in the spindle pole. It carries out the reaction Release of an N-terminal amino acid, preferentially alanine, from a wide range of peptides, amides and arylamides.. Its activity is regulated as follows. Inhibited by chelating agent 1,10-phenanthroline, aminopeptidase inhibitors actinonin, amastatin, and leuhistin, and to a lesser extent by puromycin. Its function is as follows. Aminopeptidase. Required for the exit from meiosis, probably upstream of cyclin cyb-3. Involved in the establishment of the anterior-posterior polarity at the embryonic 1-cell stage by regulating the dynamics of sperm-donated centrosomes. Plays a role in oocyte maturation. Required for embryonic development. The protein is Puromycin-sensitive aminopeptidase of Caenorhabditis elegans.